We begin with the raw amino-acid sequence, 155 residues long: Small ribosomal subunit protein uS9 (155 aa).

This sequence belongs to the universal ribosomal protein uS9 family.

The polypeptide is Small ribosomal subunit protein uS9 (Rhizobium etli (strain CIAT 652)).